The chain runs to 72 residues: Conotoxin im23a (72 aa).

Positions 1-22 (MIMRMTLTLFVLVVMTAASASG) are cleaved as a signal peptide. The propeptide occupies 23 to 28 (DALTEA). Cystine bridges form between Cys34–Cys41, Cys45–Cys55, and Cys56–Cys71.

It belongs to the conotoxin K superfamily. In terms of tissue distribution, expressed by the venom duct.

Its subcellular location is the secreted. Neurotoxin that induces excitatory symptoms in mice following intracranial administration. No symptoms are observed after intraperitoneal and intravenous (tail vein) injections. This chain is Conotoxin im23a, found in Conus imperialis (Imperial cone).